The sequence spans 168 residues: Putative F-box protein At1g30945 (168 aa).

One can recognise an F-box domain in the interval 5–52; sequence KTFDSISNDLFLEILLRLSTKSIDRSRCVSKQWASILCSQDFTESEKF.

The polypeptide is Putative F-box protein At1g30945 (Arabidopsis thaliana (Mouse-ear cress)).